Reading from the N-terminus, the 271-residue chain is Vacuolar arginine/histidine antiporter stm1 (271 aa).

The PQ-loop 1 domain maps to 14–80 (LTELSSFLGA…GNVSSTVLVL (67 aa)). 3 consecutive transmembrane segments (helical) span residues 17-37 (LSSFLGALSLGCWVVLLIPQL), 49-69 (ISDLFLIIWLIGDFFNVLGSI), and 77-97 (VLVLSFYYIVSDSTLLMQIYY). Position 119 is a phosphoserine (serine 119). Helical transmembrane passes span 144–164 (FGVMGCVVIVSTIVGNLIISS), 178–198 (PFTAGCISSVLYFCARIPQII), 211–231 (IIFFVLASVGNTSYAFSILVF), and 245–265 (PWILGAFSTIFLDIYIFYQFI). The PQ-loop 2 domain occupies 185–239 (SSVLYFCARIPQIIKNHKAKSTEGLSIIFFVLASVGNTSYAFSILVFPASDYLNY).

This sequence belongs to the laat-1 family.

It localises to the vacuole membrane. The enzyme catalyses L-histidine(out) + L-arginine(in) = L-histidine(in) + L-arginine(out). Amino acid transporter that moves basic amino acids across the vacuolar membrane. Appears to function as an arginine/histidine antiporter. The chain is Vacuolar arginine/histidine antiporter stm1 (stm1) from Schizosaccharomyces pombe (strain 972 / ATCC 24843) (Fission yeast).